Here is a 937-residue protein sequence, read N- to C-terminus: Leucine--tRNA ligase (937 aa).

A 'HIGH' region motif is present at residues 34–44 (PYPSGAMHIGH). The 'KMSKS' region motif lies at 609–613 (KMSSS).

Belongs to the class-I aminoacyl-tRNA synthetase family.

It localises to the cytoplasm. It carries out the reaction tRNA(Leu) + L-leucine + ATP = L-leucyl-tRNA(Leu) + AMP + diphosphate. The chain is Leucine--tRNA ligase from Methanothermobacter thermautotrophicus (strain ATCC 29096 / DSM 1053 / JCM 10044 / NBRC 100330 / Delta H) (Methanobacterium thermoautotrophicum).